The primary structure comprises 418 residues: Serine hydroxymethyltransferase (418 aa).

(6S)-5,6,7,8-tetrahydrofolate contacts are provided by residues leucine 121 and 125–127 (GHL). The residue at position 230 (lysine 230) is an N6-(pyridoxal phosphate)lysine. 356-358 (SPF) contacts (6S)-5,6,7,8-tetrahydrofolate.

It belongs to the SHMT family. As to quaternary structure, homodimer. Pyridoxal 5'-phosphate serves as cofactor.

The protein resides in the cytoplasm. The catalysed reaction is (6R)-5,10-methylene-5,6,7,8-tetrahydrofolate + glycine + H2O = (6S)-5,6,7,8-tetrahydrofolate + L-serine. It participates in one-carbon metabolism; tetrahydrofolate interconversion. The protein operates within amino-acid biosynthesis; glycine biosynthesis; glycine from L-serine: step 1/1. In terms of biological role, catalyzes the reversible interconversion of serine and glycine with tetrahydrofolate (THF) serving as the one-carbon carrier. This reaction serves as the major source of one-carbon groups required for the biosynthesis of purines, thymidylate, methionine, and other important biomolecules. Also exhibits THF-independent aldolase activity toward beta-hydroxyamino acids, producing glycine and aldehydes, via a retro-aldol mechanism. The chain is Serine hydroxymethyltransferase from Idiomarina loihiensis (strain ATCC BAA-735 / DSM 15497 / L2-TR).